The following is a 493-amino-acid chain: Vacuolar-processing enzyme (493 aa).

An N-terminal signal peptide occupies residues methionine 1–leucine 19. N-linked (GlcNAc...) asparagine glycosylation is present at asparagine 147. Histidine 174 is an active-site residue. The active-site Nucleophile is the cysteine 216. Cysteine 249 and cysteine 263 form a disulfide bridge. Asparagine 295 and asparagine 331 each carry an N-linked (GlcNAc...) asparagine glycan. 2 cysteine pairs are disulfide-bonded: cysteine 429-cysteine 459 and cysteine 441-cysteine 476.

This sequence belongs to the peptidase C13 family.

Functionally, asparagine-specific endopeptidase involved in the processing of vacuolar seed protein precursors into the mature forms. This Vicia sativa (Spring vetch) protein is Vacuolar-processing enzyme.